The chain runs to 289 residues: Ribosomal protein L11 methyltransferase (289 aa).

Residues threonine 135, glycine 156, aspartate 179, and asparagine 225 each contribute to the S-adenosyl-L-methionine site.

It belongs to the methyltransferase superfamily. PrmA family.

It localises to the cytoplasm. It catalyses the reaction L-lysyl-[protein] + 3 S-adenosyl-L-methionine = N(6),N(6),N(6)-trimethyl-L-lysyl-[protein] + 3 S-adenosyl-L-homocysteine + 3 H(+). Functionally, methylates ribosomal protein L11. This is Ribosomal protein L11 methyltransferase from Chlorobaculum parvum (strain DSM 263 / NCIMB 8327) (Chlorobium vibrioforme subsp. thiosulfatophilum).